We begin with the raw amino-acid sequence, 483 residues long: Altronate oxidoreductase (483 aa).

Residue 18-29 (IIQFGEGNFLRA) coordinates NAD(+).

Belongs to the mannitol dehydrogenase family. UxaB subfamily.

It catalyses the reaction D-altronate + NAD(+) = keto-D-tagaturonate + NADH + H(+). The protein operates within carbohydrate metabolism; pentose and glucuronate interconversion. In Escherichia coli O1:K1 / APEC, this protein is Altronate oxidoreductase.